A 152-amino-acid chain; its full sequence is VQ motif-containing protein 8, chloroplastic (152 aa).

The disordered stretch occupies residues 1–42 (MIPTRCNEINGSRPSSLKLAGESHTIKKTSSCKSKPRPHGRA). Residues 1 to 58 (MIPTRCNEINGSRPSSLKLAGESHTIKKTSSCKSKPRPHGRASPVIIYAHSPKVIHTR) constitute a chloroplast transit peptide. The VQ motif lies at 62 to 71 (FMALVQRLTG). The tract at residues 80–108 (TSESSSSVVTEEVNVGDDNTAAPFSQDRT) is disordered. The span at 81 to 92 (SESSSSVVTEEV) shows a compositional bias: low complexity.

It localises to the plastid. It is found in the chloroplast. Functionally, may be involved in chloroplast development. The sequence is that of VQ motif-containing protein 8, chloroplastic from Arabidopsis thaliana (Mouse-ear cress).